Consider the following 148-residue polypeptide: uncharacterized protein (148 aa).

The ABC transmembrane type-1 domain occupies 25 to 148 (LSIGLIFSLI…YSITNIFIYN (124 aa)). A run of 3 helical transmembrane segments spans residues 26–46 (SIGL…PLII), 60–80 (IVII…STYI), and 127–147 (ITRV…IFIY).

It localises to the cell membrane. This is an uncharacterized protein from Staphylococcus epidermidis.